A 569-amino-acid polypeptide reads, in one-letter code: Myotubularin-related protein 9 (569 aa).

The region spanning 134–513 (GWSAFDLEQE…QCIKIWDRLF (380 aa)) is the Myotubularin phosphatase domain.

It belongs to the protein-tyrosine phosphatase family. Non-receptor class myotubularin subfamily. As to quaternary structure, heterodimer with lipid phosphatase mtm-6.

Its subcellular location is the cytoplasm. The protein localises to the membrane. Its function is as follows. May act as a regulatory subunit for mtm-6. In association with phosphatase mtm-6, plays a role in endosome trafficking probably by regulating phosphatidylinositol-3-phosphate levels. Regulates fluid phase endocytosis in coelomocytes. Regulates posterior migration of QL neuroblast descendants and the anterior migration of QR neuroblast descendants and HSN neurons during larval development probably by controlling Wnt ligand secretion through the regulation of sorting receptor mig-14 trafficking. Involved in the formation of correct synapse number in DA9 motor neurons. This is Myotubularin-related protein 9 from Caenorhabditis elegans.